The sequence spans 410 residues: Platelet-activating factor acetylhydrolase IB subunit alpha (410 aa).

The interval 1-38 (MVLSQRQRDELNRAIADYLRSNGYEEAYSVFKKEAELD) is required for self-association and interaction with PAFAH1B2 and PAFAH1B3. An interaction with NDE1 region spans residues 1–66 (MVLSQRQRDE…SVIRLQKKVM (66 aa)). The interval 1 to 102 (MVLSQRQRDE…EWIPRPPEKY (102 aa)) is interaction with NDEL1. The 33-residue stretch at 7–39 (QRDELNRAIADYLRSNGYEEAYSVFKKEAELDM) folds into the LisH domain. Lys-53 is subject to N6-acetyllysine. A coiled-coil region spans residues 56-82 (TSVIRLQKKVMELESKLNEAKEEFTSG). The interval 83–410 (GPLGQKRDPK…DQTVKVWECR (328 aa)) is interaction with dynein and dynactin. WD repeat units lie at residues 106–147 (GHRS…RTLK), 148–187 (GHTDSVQDISFDHSGKLLASCSADMTIKLWDFQGFECIRT), 190–229 (GHDHNVSSVAIMPNGDHIVSASRDKTIKMWEVQTGYCVKT), 232–271 (GHREWVRMVRPNQDGTLIASCSNDQTVRVWVVATKECKAE), 274–333 (EHEH…CLMT), 336–377 (GHDN…KTLN), and 379–410 (HEHFVTSLDFHKTAPYVVTGFVDQTVKVWECR). A Phosphoserine modification is found at Ser-109. The interaction with DCX stretch occupies residues 367-409 (YKNKRCMKTLNAHEHFVTSLDFHKTAPYVVTGFVDQTVKVWEC). The interaction with NDEL1 stretch occupies residues 388 to 410 (FHKTAPYVVTGFVDQTVKVWECR).

The protein belongs to the WD repeat LIS1/nudF family. In terms of assembly, can self-associate. Component of the cytosolic PAF-AH (I) heterotetrameric enzyme, which is composed of PAFAH1B1 (beta), PAFAH1B2 (alpha2) and PAFAH1B3 (alpha1) subunits. The catalytic activity of the enzyme resides in the alpha1 (PAFAH1B3) and alpha2 (PAFAH1B2) subunits, whereas the beta subunit (PAFAH1B1) has regulatory activity. Trimer formation is not essential for the catalytic activity. Interacts with the catalytic dimer of PAF-AH (I) heterotetrameric enzyme: interacts with PAFAH1B2 homodimer (alpha2/alpha2 homodimer), PAFAH1B3 homodimer (alpha1/alpha1 homodimer) and PAFAH1B2-PAFAH1B3 heterodimer (alpha2/alpha1 heterodimer). Interacts with DCX, dynein, dynactin, IQGAP1, KATNB1, NDE1, NDEL1, NUDC and RSN. Interacts with DISC1, and this interaction is enhanced by NDEL1. Interacts with DAB1 when DAB1 is phosphorylated in response to RELN/reelin signaling. Interacts with INTS13. Interacts with DCDC1.

It is found in the cytoplasm. The protein localises to the cytoskeleton. Its subcellular location is the microtubule organizing center. It localises to the centrosome. The protein resides in the spindle. It is found in the nucleus membrane. In terms of biological role, regulatory subunit (beta subunit) of the cytosolic type I platelet-activating factor (PAF) acetylhydrolase (PAF-AH (I)), an enzyme that catalyzes the hydrolyze of the acetyl group at the sn-2 position of PAF and its analogs and participates in PAF inactivation. Regulates the PAF-AH (I) activity in a catalytic dimer composition-dependent manner. Positively regulates the activity of the minus-end directed microtubule motor protein dynein. May enhance dynein-mediated microtubule sliding by targeting dynein to the microtubule plus end. Required for several dynein- and microtubule-dependent processes such as the maintenance of Golgi integrity, the peripheral transport of microtubule fragments and the coupling of the nucleus and centrosome. Required during brain development for the proliferation of neuronal precursors and the migration of newly formed neurons from the ventricular/subventricular zone toward the cortical plate. Neuronal migration involves a process called nucleokinesis, whereby migrating cells extend an anterior process into which the nucleus subsequently translocates. During nucleokinesis dynein at the nuclear surface may translocate the nucleus towards the centrosome by exerting force on centrosomal microtubules. Also required for proper activation of Rho GTPases and actin polymerization at the leading edge of locomoting cerebellar neurons and postmigratory hippocampal neurons in response to calcium influx triggered via NMDA receptors. May also play a role in other forms of cell locomotion including the migration of fibroblasts during wound healing. Required for dynein recruitment to microtubule plus ends and BICD2-bound cargos. May modulate the Reelin pathway through interaction of the PAF-AH (I) catalytic dimer with VLDLR. The chain is Platelet-activating factor acetylhydrolase IB subunit alpha from Pan troglodytes (Chimpanzee).